A 726-amino-acid chain; its full sequence is Sensory/regulatory protein RpfC (726 aa).

5 consecutive transmembrane segments (helical) span residues N23–R40, T52–L72, I95–I115, A128–K148, and Y152–L172. Residues N195–I417 enclose the Histidine kinase domain. H198 carries the post-translational modification Phosphohistidine; by autocatalysis. Residues R463–A581 form the Response regulatory domain. Residue D512 is modified to 4-aspartylphosphate. Positions G618 to R711 constitute an HPt domain. H657 carries the phosphohistidine modification.

As to quaternary structure, at low DSF concentrations, interacts with RpfF. In terms of processing, autophosphorylated. Activation may require a sequential transfer of a phosphate group from a His in the primary transmitter domain, to an Asp in the receiver domain and to a His in the secondary transmitter domain.

It is found in the cell inner membrane. The catalysed reaction is ATP + protein L-histidine = ADP + protein N-phospho-L-histidine.. With respect to regulation, binding of DSF to the sensor region causes allosteric change, which facilitates RpfC autophosphorylation. In terms of biological role, hybrid sensor kinase that regulates diverse biological functions through two distinct molecular mechanisms. At low cell density, the extracellular concentration of the diffusible signaling factor (DSF) is below a threshold, and unphosphorylated RpfC is involved in the negative regulation of DSF synthesis, via direct interaction with the DSF synthase RpfF. Interaction prevents synthesis of DSF, which remains at a basal level. This activity does not involve the phosphorelay mechanism and is not dependent on RpfG. Is also member of the two-component regulatory system RpfG/RpfC, which is involved in the perception and response to DSF, which is essential for cell-cell signaling. At high cell density, the level of extracellular DSF increases and binding of DSF to the sensor region of RpfC causes autophosphorylation of RpfC, which results in the release of RpfF and the activation of RpfG via a four-step phosphorelay. Activation of RpfG leads to the positive regulation of biofilm dispersal and the production of virulence factors. The polypeptide is Sensory/regulatory protein RpfC (rpfC) (Xanthomonas campestris pv. campestris (strain ATCC 33913 / DSM 3586 / NCPPB 528 / LMG 568 / P 25)).